The following is a 146-amino-acid chain: Large ribosomal subunit protein uL15 (146 aa).

Residues methionine 1–arginine 18 are compositionally biased toward basic and acidic residues. Residues methionine 1–phenylalanine 50 form a disordered region. Positions arginine 21–serine 31 are enriched in gly residues.

Belongs to the universal ribosomal protein uL15 family. Part of the 50S ribosomal subunit.

Binds to the 23S rRNA. The chain is Large ribosomal subunit protein uL15 from Listeria welshimeri serovar 6b (strain ATCC 35897 / DSM 20650 / CCUG 15529 / CIP 8149 / NCTC 11857 / SLCC 5334 / V8).